The primary structure comprises 288 residues: MFRTAYKTMNQSMVQKFIAGGVGVTGLTASYLLYQDSMTADAMTAAEHGLHPPAYNWPHNGMFETFDHASIRRGFQVYREVCAACHSLDRIAWRNLVGVSHTTSEAKAMAEELEYDDEPDDEGKPRKRPGKLADYIPGPYENEQAARAANQGAYPPDLSLIVKARHGGSDYIFSLLTGYPDEPPAGVVLPEGSNYNPYFPGGAIAMGRVLFDDLVEYEDGTPATTSQMAKDVSTFLNWASEPEHDDRKKWGLKALVVLSSLYLLSIWVKRFKWTPIKNRKFRFDPPKK.

Residues 12-34 (SMVQKFIAGGVGVTGLTASYLLY) form a helical membrane-spanning segment. The 154-residue stretch at 69–222 (ASIRRGFQVY…DLVEYEDGTP (154 aa)) folds into the Cytochrome c domain. 3 residues coordinate heme c: cysteine 82, cysteine 85, and histidine 86. Over residues 111–121 (EELEYDDEPDD) the composition is skewed to acidic residues. The interval 111–138 (EELEYDDEPDDEGKPRKRPGKLADYIPG) is disordered. The helical transmembrane segment at 250–268 (WGLKALVVLSSLYLLSIWV) threads the bilayer.

This sequence belongs to the cytochrome c family. As to quaternary structure, component of the ubiquinol-cytochrome c oxidoreductase (cytochrome b-c1 complex, complex III, CIII), a multisubunit enzyme composed of 10 subunits. The complex is composed of 3 respiratory subunits cytochrome b (COB), cytochrome c1 (CYT1) and Rieske protein (RIP1), 2 core protein subunits COR1 and QCR2, and 5 low-molecular weight protein subunits QCR6, QCR7, QCR8, QCR9 and QCR10. The complex exists as an obligatory dimer and forms supercomplexes (SCs) in the inner mitochondrial membrane with a monomer or a dimer of cytochrome c oxidase (complex IV, CIV), resulting in 2 different assemblies (supercomplexes III(2)IV and III(2)IV(2)). The cofactor is heme c.

The protein localises to the mitochondrion inner membrane. It carries out the reaction a quinol + 2 Fe(III)-[cytochrome c](out) = a quinone + 2 Fe(II)-[cytochrome c](out) + 2 H(+)(out). In terms of biological role, component of the ubiquinol-cytochrome c oxidoreductase, a multisubunit transmembrane complex that is part of the mitochondrial electron transport chain which drives oxidative phosphorylation. The complex plays an important role in the uptake of multiple carbon sources present in different host niches. The polypeptide is Cytochrome b-c1 complex catalytic subunit, mitochondrial (Candida albicans (strain SC5314 / ATCC MYA-2876) (Yeast)).